The primary structure comprises 296 residues: Nucleotide-binding protein ABC3036 (296 aa).

13–20 (GMSGAGKS) lines the ATP pocket. 64-67 (DLRG) contributes to the GTP binding site.

Belongs to the RapZ-like family.

In terms of biological role, displays ATPase and GTPase activities. This chain is Nucleotide-binding protein ABC3036, found in Shouchella clausii (strain KSM-K16) (Alkalihalobacillus clausii).